The sequence spans 1157 residues: Hephaestin (1157 aa).

The signal sequence occupies residues 1 to 23; sequence MKAGHLLWALLLMHSLCSLPTDG. 6 consecutive Plastocyanin-like domains span residues 24 to 206, 218 to 366, 370 to 559, 569 to 717, 730 to 902, and 910 to 1066; these read AIRN…LITC, QRKD…VDSC, PPVE…LLVC, KQKG…VSQC, ASRV…LVIC, and NGGR…SHEE. At 24 to 1109 the chain is on the extracellular side; it reads AIRNYYLGIQ…PVKNVEILSS (1086 aa). 2 N-linked (GlcNAc...) asparagine glycosylation sites follow: Asn49 and Asn54. Residues Gly70 and Tyr73 each coordinate Na(+). Residues His126 and His128 each coordinate Cu(2+). His126 is an O2 binding site. Positions 134, 152, and 153 each coordinate Ca(2+). A glycan (N-linked (GlcNAc...) asparagine) is linked at Asn164. An intrachain disulfide couples Cys180 to Cys206. Cu(2+)-binding residues include His186 and His188. His186 lines the O2 pocket. Asn236 is a glycosylation site (N-linked (GlcNAc...) asparagine). Position 265 (Ser265) interacts with Na(+). Cys285 and Cys366 are oxidised to a cystine. Cu(2+)-binding residues include His304, Cys347, and His352. 3 residues coordinate Na(+): Tyr416, Gly425, and Tyr428. A disulfide bridge links Cys533 with Cys559. The N-linked (GlcNAc...) asparagine glycan is linked to Asn587. Ser616 provides a ligand contact to Na(+). Cys636 and Cys717 form a disulfide bridge. 4 residues coordinate Cu(2+): His655, Cys698, His703, and Met708. N-linked (GlcNAc...) asparagine glycans are attached at residues Asn713 and Asn757. Positions 768 and 777 each coordinate Na(+). Cys876 and Cys902 are oxidised to a cystine. Asn930 carries an N-linked (GlcNAc...) asparagine glycan. Cu(2+) is bound by residues His999, His1002, His1004, His1044, Cys1045, His1046, His1050, and Met1055. The O2 site is built by His1002 and His1004. His1046 contributes to the O2 binding site. A helical membrane pass occupies residues 1110-1130; that stretch reads ALIAICVVLLLIALALGGVVW. Residues 1131 to 1157 lie on the Cytoplasmic side of the membrane; the sequence is YQHRQRKLRRNRRSILDDSFKLLSLKQ. Phosphoserine is present on residues Ser1144, Ser1149, and Ser1154.

This sequence belongs to the multicopper oxidase family. As to quaternary structure, part of a complex composed of SLC40A1/ferroportin, TF/transferrin and HEPH/hephaestin that transfers iron from cells to transferrin. Requires Cu cation as cofactor. Highly expressed in small intestine and colon.

Its subcellular location is the basolateral cell membrane. It catalyses the reaction 4 Fe(2+) + O2 + 4 H(+) = 4 Fe(3+) + 2 H2O. Functionally, plasma membrane ferroxidase that mediates the extracellular conversion of ferrous/Fe(2+) iron into its ferric/Fe(3+) form. Couples ferroportin which specifically exports ferrous/Fe(2+) iron from cells to transferrin that only binds and shuttles extracellular ferric/Fe(3+) iron throughout the body. By helping iron transfer from cells to blood mainly contributes to dietary iron absorption by the intestinal epithelium and more generally regulates iron levels in the body. The sequence is that of Hephaestin from Rattus norvegicus (Rat).